Reading from the N-terminus, the 545-residue chain is Chaperonin GroEL 1 (545 aa).

Residues 29 to 32 (TLGP), 86 to 90 (DGTTT), Gly-413, 479 to 481 (DAA), and Asp-495 each bind ATP. The disordered stretch occupies residues 525 to 545 (PEPKENNPAGSGAGMGGDFDY). Gly residues predominate over residues 535 to 545 (SGAGMGGDFDY).

It belongs to the chaperonin (HSP60) family. In terms of assembly, forms a cylinder of 14 subunits composed of two heptameric rings stacked back-to-back. Interacts with the co-chaperonin GroES.

It is found in the cytoplasm. The catalysed reaction is ATP + H2O + a folded polypeptide = ADP + phosphate + an unfolded polypeptide.. Its function is as follows. Together with its co-chaperonin GroES, plays an essential role in assisting protein folding. The GroEL-GroES system forms a nano-cage that allows encapsulation of the non-native substrate proteins and provides a physical environment optimized to promote and accelerate protein folding. This is Chaperonin GroEL 1 from Thermosynechococcus vestitus (strain NIES-2133 / IAM M-273 / BP-1).